Consider the following 311-residue polypeptide: Aspartate carbamoyltransferase catalytic subunit (311 aa).

R59 and T60 together coordinate carbamoyl phosphate. K87 is an L-aspartate binding site. Carbamoyl phosphate-binding residues include R109, H139, and Q142. L-aspartate is bound by residues R172 and R224. The carbamoyl phosphate site is built by A265 and P266.

The protein belongs to the aspartate/ornithine carbamoyltransferase superfamily. ATCase family. Heterododecamer (2C3:3R2) of six catalytic PyrB chains organized as two trimers (C3), and six regulatory PyrI chains organized as three dimers (R2).

The enzyme catalyses carbamoyl phosphate + L-aspartate = N-carbamoyl-L-aspartate + phosphate + H(+). Its pathway is pyrimidine metabolism; UMP biosynthesis via de novo pathway; (S)-dihydroorotate from bicarbonate: step 2/3. Its function is as follows. Catalyzes the condensation of carbamoyl phosphate and aspartate to form carbamoyl aspartate and inorganic phosphate, the committed step in the de novo pyrimidine nucleotide biosynthesis pathway. This chain is Aspartate carbamoyltransferase catalytic subunit, found in Streptococcus pyogenes serotype M1.